We begin with the raw amino-acid sequence, 452 residues long: UDP-N-acetylmuramoylalanine--D-glutamate ligase (452 aa).

An ATP-binding site is contributed by 119–125; it reads GSNGKTT.

It belongs to the MurCDEF family.

Its subcellular location is the cytoplasm. It catalyses the reaction UDP-N-acetyl-alpha-D-muramoyl-L-alanine + D-glutamate + ATP = UDP-N-acetyl-alpha-D-muramoyl-L-alanyl-D-glutamate + ADP + phosphate + H(+). It participates in cell wall biogenesis; peptidoglycan biosynthesis. In terms of biological role, cell wall formation. Catalyzes the addition of glutamate to the nucleotide precursor UDP-N-acetylmuramoyl-L-alanine (UMA). This is UDP-N-acetylmuramoylalanine--D-glutamate ligase from Streptococcus pyogenes serotype M12 (strain MGAS9429).